Here is a 314-residue protein sequence, read N- to C-terminus: UPF0761 membrane protein VIBHAR_00593 (314 aa).

A run of 6 helical transmembrane segments spans residues 41–61, 104–124, 143–163, 185–205, 217–237, and 249–269; these read YLAY…LSIL, MTAV…SNID, FSMY…SIAV, FLRW…YFLV, IGAA…AFYI, and ALAA…IVLI.

Belongs to the UPF0761 family.

Its subcellular location is the cell inner membrane. The polypeptide is UPF0761 membrane protein VIBHAR_00593 (Vibrio campbellii (strain ATCC BAA-1116)).